We begin with the raw amino-acid sequence, 567 residues long: Malate synthase, glyoxysomal (567 aa).

R182 functions as the Proton acceptor in the catalytic mechanism. D468 serves as the catalytic Proton donor. The Microbody targeting signal signature appears at S565–L567.

This sequence belongs to the malate synthase family.

Its subcellular location is the glyoxysome. It catalyses the reaction glyoxylate + acetyl-CoA + H2O = (S)-malate + CoA + H(+). The protein operates within carbohydrate metabolism; glyoxylate cycle; (S)-malate from isocitrate: step 2/2. The sequence is that of Malate synthase, glyoxysomal from Ricinus communis (Castor bean).